Consider the following 99-residue polypeptide: Cell division protein FtsB (99 aa).

The Cytoplasmic segment spans residues 1 to 3 (MKF). Residues 4 to 21 (FVIALIVLLGLLQYRLWS) traverse the membrane as a helical segment. The Periplasmic portion of the chain corresponds to 22–99 (GSNSLPEYFV…GERSVSSPSQ (78 aa)). Residues 36-73 (IAVQQEGNDKLNERNQVLKEEIIDLKSGTEAIEERARN) are a coiled coil.

This sequence belongs to the FtsB family. As to quaternary structure, part of a complex composed of FtsB, FtsL and FtsQ.

It is found in the cell inner membrane. Functionally, essential cell division protein. May link together the upstream cell division proteins, which are predominantly cytoplasmic, with the downstream cell division proteins, which are predominantly periplasmic. In Shewanella sp. (strain W3-18-1), this protein is Cell division protein FtsB.